A 225-amino-acid polypeptide reads, in one-letter code: NAD(P)H-quinone oxidoreductase subunit K, chloroplastic (225 aa).

The [4Fe-4S] cluster site is built by Cys-43, Cys-44, Cys-108, and Cys-139.

It belongs to the complex I 20 kDa subunit family. NDH is composed of at least 16 different subunits, 5 of which are encoded in the nucleus. [4Fe-4S] cluster is required as a cofactor.

The protein localises to the plastid. The protein resides in the chloroplast thylakoid membrane. It catalyses the reaction a plastoquinone + NADH + (n+1) H(+)(in) = a plastoquinol + NAD(+) + n H(+)(out). The catalysed reaction is a plastoquinone + NADPH + (n+1) H(+)(in) = a plastoquinol + NADP(+) + n H(+)(out). Functionally, NDH shuttles electrons from NAD(P)H:plastoquinone, via FMN and iron-sulfur (Fe-S) centers, to quinones in the photosynthetic chain and possibly in a chloroplast respiratory chain. The immediate electron acceptor for the enzyme in this species is believed to be plastoquinone. Couples the redox reaction to proton translocation, and thus conserves the redox energy in a proton gradient. The polypeptide is NAD(P)H-quinone oxidoreductase subunit K, chloroplastic (Agrostis stolonifera (Creeping bentgrass)).